The chain runs to 101 residues: Small ribosomal subunit protein bS18c (101 aa).

It belongs to the bacterial ribosomal protein bS18 family. Part of the 30S ribosomal subunit.

Its subcellular location is the plastid. The protein localises to the chloroplast. The chain is Small ribosomal subunit protein bS18c from Gossypium barbadense (Sea Island cotton).